A 461-amino-acid polypeptide reads, in one-letter code: D-phenylhydantoinase (461 aa).

A divalent metal cation-binding residues include His59, His61, and Lys151. Position 151 is an N6-carboxylysine (Lys151). Tyr156 is a substrate binding site. 2 residues coordinate a divalent metal cation: His182 and His239. Position 286 (Ser286) interacts with substrate. Asp313 serves as a coordination point for a divalent metal cation. Residue Asn335 coordinates substrate.

This sequence belongs to the metallo-dependent hydrolases superfamily. Hydantoinase/dihydropyrimidinase family. As to quaternary structure, homotetramer. Requires a divalent metal cation as cofactor. In terms of processing, carboxylation allows a single lysine to coordinate two divalent metal cations.

The catalysed reaction is D-5-phenylhydantoin + H2O = N-carbamoyl-D-phenylglycine + H(+). Catalyzes the stereospecific hydrolysis of the cyclic amide bond of D-hydantoin derivatives with an aromatic side chains at the 5'-position. Has no activity on dihydropyrimidines. The physiological function is unknown. This chain is D-phenylhydantoinase, found in Escherichia coli O7:K1 (strain IAI39 / ExPEC).